A 213-amino-acid chain; its full sequence is Orotate phosphoribosyltransferase (213 aa).

Residue Lys-26 participates in 5-phospho-alpha-D-ribose 1-diphosphate binding. Orotate is bound at residue 34–35 (FF). 5-phospho-alpha-D-ribose 1-diphosphate contacts are provided by residues 72-73 (YK), Arg-99, Lys-100, Lys-103, His-105, and 124-132 (DDVITAGTA). Residues Thr-128 and Arg-156 each contribute to the orotate site.

Belongs to the purine/pyrimidine phosphoribosyltransferase family. PyrE subfamily. As to quaternary structure, homodimer. Mg(2+) is required as a cofactor.

It catalyses the reaction orotidine 5'-phosphate + diphosphate = orotate + 5-phospho-alpha-D-ribose 1-diphosphate. Its pathway is pyrimidine metabolism; UMP biosynthesis via de novo pathway; UMP from orotate: step 1/2. Catalyzes the transfer of a ribosyl phosphate group from 5-phosphoribose 1-diphosphate to orotate, leading to the formation of orotidine monophosphate (OMP). This chain is Orotate phosphoribosyltransferase, found in Shigella flexneri.